We begin with the raw amino-acid sequence, 820 residues long: Inhibitor of nuclear factor kappa-B kinase epsilon subunit homolog 1 (820 aa).

The Protein kinase domain occupies 21-299 (LFNDESIGKG…TDIFEFQPVT (279 aa)). Residues 27–35 (IGKGAYSEV) and Lys49 each bind ATP. The Proton acceptor role is filled by Asp149. Residues 758 to 798 (SPNKEQFPKPEQDSILESSIDEGSTSFESTPPSSPPDVGSN) form a disordered region.

Belongs to the protein kinase superfamily. Ser/Thr protein kinase family. As to quaternary structure, interacts with allo-1 (via N-terminus); the interaction is direct. As to expression, expressed in oocytes.

It is found in the cytoplasm. It carries out the reaction L-seryl-[protein] + ATP = O-phospho-L-seryl-[protein] + ADP + H(+). The enzyme catalyses L-threonyl-[protein] + ATP = O-phospho-L-threonyl-[protein] + ADP + H(+). In terms of biological role, serine/threonine-protein kinase, which plays a role in regulating allophagy, an autophagic process in which paternal organelles, including mitochondria and membranous organelles, are degraded in embryos. Phosphorylates the allophagy receptor allo-1, which is required for allophagy. This chain is Inhibitor of nuclear factor kappa-B kinase epsilon subunit homolog 1, found in Caenorhabditis elegans.